The following is a 778-amino-acid chain: Serine/threonine-protein kinase BRSK1 (778 aa).

Over residues 1–12 (MSSGSKEGGGGS) the composition is skewed to gly residues. The segment at 1–29 (MSSGSKEGGGGSPAYHLPHPHPHPPQHAQ) is disordered. Residues 34-285 (YRLEKTLGKG…LEQIQKHPWY (252 aa)) enclose the Protein kinase domain. Residues 40–48 (LGKGQTGLV) and Lys63 each bind ATP. The Proton acceptor role is filled by Asp156. Residue Thr189 is modified to Phosphothreonine; by LKB1. Position 193 is a phosphoserine (Ser193). A UBA domain is found at 314-356 (ELDPDVLESMASLGCFRDRERLHRELRSEEENQEKMIYYLLLD). A compositionally biased stretch (basic and acidic residues) spans 362-383 (PSCEDQDLPPRNDVDPPRKRVD). The disordered stretch occupies residues 362–548 (PSCEDQDLPP…SPGGGVGGAA (187 aa)). 4 positions are modified to phosphoserine: Ser399, Ser443, Ser447, and Ser450. Low complexity predominate over residues 430 to 457 (SRSVSGASTGLSSSPLSSPRSPVFSFSP). Arg466, Arg481, Arg484, and Arg498 each carry omega-N-methylarginine. Positions 491–508 (QPPPPSARSTPLPGPPGS) are enriched in pro residues. The residue at position 508 (Ser508) is a Phosphoserine. A compositionally biased stretch (low complexity) spans 509-533 (PRSSGGTPLHSPLHTPRASPTGTPG). The residue at position 525 (Arg525) is an Omega-N-methylarginine. Thr529 and Thr535 each carry phosphothreonine. At Arg550 the chain carries Omega-N-methylarginine. Residue Thr583 is modified to Phosphothreonine. A phosphoserine mark is found at Ser586, Ser587, and Ser601. Positions 719–778 (QPSVQALADEKNGAQTRPAGTPPRSLQPPPGRPDPDLSSSPRRGPSKDKKLLATNGTPLP) are disordered.

The protein belongs to the protein kinase superfamily. CAMK Ser/Thr protein kinase family. SNF1 subfamily. Mg(2+) serves as cofactor. In terms of processing, phosphorylated at Thr-189 by STK11/LKB1 in complex with STE20-related adapter-alpha (STRADA) pseudo kinase and CAB39. Not phosphorylated at Thr-189 by CaMKK2. In contrast, it is phosphorylated and activated by CaMKK1. May be inactivated via dephosphorylation of Thr-189 by PP2C. May be autophosphorylated. In terms of tissue distribution, mainly present in brain. Present in presynaptic nerve terminals (at protein level).

The protein resides in the cytoplasm. Its subcellular location is the nucleus. It is found in the cytoskeleton. It localises to the microtubule organizing center. The protein localises to the centrosome. The protein resides in the synapse. Its subcellular location is the presynaptic active zone. It is found in the cytoplasmic vesicle. It localises to the secretory vesicle. The protein localises to the synaptic vesicle. It carries out the reaction L-seryl-[protein] + ATP = O-phospho-L-seryl-[protein] + ADP + H(+). The catalysed reaction is L-threonyl-[protein] + ATP = O-phospho-L-threonyl-[protein] + ADP + H(+). The enzyme catalyses L-seryl-[tau protein] + ATP = O-phospho-L-seryl-[tau protein] + ADP + H(+). It catalyses the reaction L-threonyl-[tau protein] + ATP = O-phospho-L-threonyl-[tau protein] + ADP + H(+). With respect to regulation, activated by phosphorylation on Thr-189 by STK11/LKB1. Serine/threonine-protein kinase that plays a key role in polarization of neurons and centrosome duplication. Phosphorylates CDC25B, CDC25C, MAPT/TAU, RIMS1, TUBG1, TUBG2 and WEE1. Following phosphorylation and activation by STK11/LKB1, acts as a key regulator of polarization of cortical neurons, probably by mediating phosphorylation of microtubule-associated proteins such as MAPT/TAU at 'Thr-523' and 'Ser-573'. Also regulates neuron polarization by mediating phosphorylation of WEE1 at 'Ser-642' in postmitotic neurons, leading to down-regulate WEE1 activity in polarized neurons. Also acts as a positive regulator of centrosome duplication by mediating phosphorylation of gamma-tubulin (TUBG1 and TUBG2) at 'Ser-131', leading to translocation of gamma-tubulin and its associated proteins to the centrosome. Involved in the UV-induced DNA damage checkpoint response, probably by inhibiting CDK1 activity through phosphorylation and activation of WEE1, and inhibition of CDC25B and CDC25C. In neurons, localizes to synaptic vesicles and plays a role in neurotransmitter release, possibly by phosphorylating RIMS1. The protein is Serine/threonine-protein kinase BRSK1 (Brsk1) of Rattus norvegicus (Rat).